Consider the following 453-residue polypeptide: Ribulose bisphosphate carboxylase large chain (453 aa).

Residues 1–2 constitute a propeptide that is removed on maturation; sequence MS. Proline 3 carries the post-translational modification N-acetylproline. Position 14 is an N6,N6,N6-trimethyllysine (lysine 14). Residues asparagine 123 and threonine 173 each coordinate substrate. Lysine 175 acts as the Proton acceptor in catalysis. Lysine 177 contacts substrate. Positions 201, 203, and 204 each coordinate Mg(2+). An N6-carboxylysine modification is found at lysine 201. Catalysis depends on histidine 294, which acts as the Proton acceptor. 3 residues coordinate substrate: arginine 295, histidine 327, and serine 379.

The protein belongs to the RuBisCO large chain family. Type I subfamily. Heterohexadecamer of 8 large chains and 8 small chains; disulfide-linked. The disulfide link is formed within the large subunit homodimers. It depends on Mg(2+) as a cofactor. In terms of processing, the disulfide bond which can form in the large chain dimeric partners within the hexadecamer appears to be associated with oxidative stress and protein turnover.

The protein resides in the plastid. It is found in the chloroplast. The catalysed reaction is 2 (2R)-3-phosphoglycerate + 2 H(+) = D-ribulose 1,5-bisphosphate + CO2 + H2O. It carries out the reaction D-ribulose 1,5-bisphosphate + O2 = 2-phosphoglycolate + (2R)-3-phosphoglycerate + 2 H(+). Its function is as follows. RuBisCO catalyzes two reactions: the carboxylation of D-ribulose 1,5-bisphosphate, the primary event in carbon dioxide fixation, as well as the oxidative fragmentation of the pentose substrate in the photorespiration process. Both reactions occur simultaneously and in competition at the same active site. The protein is Ribulose bisphosphate carboxylase large chain of Asperula laevigata (Smooth woodruff).